The following is a 1018-amino-acid chain: MKMWLLFSLLVIISFKTCLSEFTWHRRYGHGVSEEDKGFGPIFEEQPINTIYPEESPEGKVSLNCRARASPFPVYKWRMNNGDIDLTSDRYSMVGGNLVINNPDKQKDAGIYYCLASNNYGMVRSTEATLSFGYLDPFPPEERPEVRVKEGKGMVLLCDPPYHFPDDLSYRWLLNEFPVFITMDKRRFVSQTNGNLYIANVEASDKGNYSCFVSSPSITKSVFSKFIPLIPLPERTTKPYPADIVVQFKDVYALMGQNVTLECFALGNPVPDIRWRKVLEPMPSTAEISTSGAVLKIFNIQLEDEGIYECEAENNRGKDKHQARIYVQAFPEWVEHINDTEVDIGSDLYWPCVATGKPIPTIRWLKNGYSYHRGELRLYDVTFENAGMYQCIAENTHGAIYANAELKILALAPTFEMNPMKKKILAAKGGRVIIECKPKAAPKPTFLWSKGTERLVNSSRILIWEDGSLEINNITRSDGGVYTCFVENNKGKANSTGTLVITDPTRIILAPINADITVGENATMQCAASFDPALDLTFVWSFNGYVIDFNKENIHYQRNFMLDSNGELLIRNAQLKHAGRYTCTAQTIVDNSSASADLVVRGPPGPPGGLRIEDIRATSVALTWSRGSDNHSPISKYTIQTKTILSDDWKDAKTDPPIIEGNMEAARAVDLIPWMEYEFRVVATNTLGIGEPSIPSNKIKTDGAAPNVAPSDVGGGGGSNRELTITWAPLSREYHYFNNFGYIVAFKPFDGEEWKKVTVTNPDTGRYVHKDETMRPSTAFQVKVKAFNNKGDGPYSLTAVIHSAQDAPSEAPTAVGVKVLSSSEISVHWEHVVEKIVESYQIRYWASHDKEAAAHRVQVASQEYSARLENLLPDTQYFVEVRACNSAGCGPPSDMTETFTKKAPPSQPPRIISSVRSGSRYIITWDHVVALSNESTVTGYKVLYRPDGQHDGKLYSTHKHSIEVPIPRDGEYVVEVRAHSDGGDGVVSQVKISGASILSPCLLGFLLPALGILVYLEF.

Positions 1 to 20 (MKMWLLFSLLVIISFKTCLS) are cleaved as a signal peptide. 6 consecutive Ig-like C2-type domains span residues 41-131 (PIFE…ATLS), 137-223 (PFPP…KSVF), 241-326 (PADI…ARIY), 331-407 (PEWV…AELK), 413-500 (PTFE…GTLV), and 504-601 (PTRI…LVVR). Intrachain disulfides connect C65-C114 and C158-C211. N-linked (GlcNAc...) asparagine glycans are attached at residues N208 and N258. Cysteines 263 and 310 form a disulfide. N338 is a glycosylation site (N-linked (GlcNAc...) asparagine). Disulfide bonds link C352-C391 and C436-C484. N457, N473, N494, and N521 each carry an N-linked (GlcNAc...) asparagine glycan. Cysteines 526 and 583 form a disulfide. An N-linked (GlcNAc...) asparagine glycan is attached at N591. 4 consecutive Fibronectin type-III domains span residues 606 to 704 (PPGG…TDGA), 709 to 806 (APSD…SAQD), 811 to 906 (APTA…APPS), and 907 to 1000 (QPPR…ILSP). Disordered regions lie at residues 698-718 (KIKT…GGGG) and 891-910 (PPSD…QPPR). S999 carries the GPI-anchor amidated serine lipid modification. A propeptide spans 1000 to 1018 (PCLLGFLLPALGILVYLEF) (removed in mature form).

This sequence belongs to the immunoglobulin superfamily. Contactin family. Monomer. Interacts with CNTNAP1 in cis form. Binds to the carbonic-anhydrase like domain of PTPRZ1. Interacts with NOTCH1 and TNR. Detected in a complex with NRCAM and PTPRB. Interacts with TASOR.

The protein localises to the cell membrane. Its function is as follows. Contactins mediate cell surface interactions during nervous system development. Involved in the formation of paranodal axo-glial junctions in myelinated peripheral nerves and in the signaling between axons and myelinating glial cells via its association with CNTNAP1. Participates in oligodendrocytes generation by acting as a ligand of NOTCH1. Its association with NOTCH1 promotes NOTCH1 activation through the released notch intracellular domain (NICD) and subsequent translocation to the nucleus. Interaction with TNR induces a repulsion of neurons and an inhibition of neurite outgrowth. The sequence is that of Contactin-1 (CNTN1) from Bos taurus (Bovine).